The chain runs to 62 residues: Large ribosomal subunit protein bL33 (62 aa).

Belongs to the bacterial ribosomal protein bL33 family.

The sequence is that of Large ribosomal subunit protein bL33 from Bacteroides thetaiotaomicron (strain ATCC 29148 / DSM 2079 / JCM 5827 / CCUG 10774 / NCTC 10582 / VPI-5482 / E50).